A 465-amino-acid polypeptide reads, in one-letter code: UDP-N-acetylmuramoylalanine--D-glutamate ligase (465 aa).

Residue 116–122 (GTNGKTT) coordinates ATP.

This sequence belongs to the MurCDEF family.

It localises to the cytoplasm. The enzyme catalyses UDP-N-acetyl-alpha-D-muramoyl-L-alanine + D-glutamate + ATP = UDP-N-acetyl-alpha-D-muramoyl-L-alanyl-D-glutamate + ADP + phosphate + H(+). It functions in the pathway cell wall biogenesis; peptidoglycan biosynthesis. Functionally, cell wall formation. Catalyzes the addition of glutamate to the nucleotide precursor UDP-N-acetylmuramoyl-L-alanine (UMA). In Thermobifida fusca (strain YX), this protein is UDP-N-acetylmuramoylalanine--D-glutamate ligase.